The following is a 393-amino-acid chain: Golgi membrane protein 1 (393 aa).

Met-1 carries the N-acetylmethionine modification. The Cytoplasmic portion of the chain corresponds to 1 to 12; it reads MMGLGNGRRSMK. A helical; Signal-anchor for type II membrane protein transmembrane segment spans residues 13–35; the sequence is SPPLILAALVACVIVLGFNYWIA. Residues 36 to 393 lie on the Lumenal side of the membrane; sequence SSRSVELQTR…QVGIHIPQQA (358 aa). Positions 40-183 form a coiled coil; the sequence is VELQTRIVEL…IEEVIRKRNE (144 aa). Asn-109 and Asn-144 each carry an N-linked (GlcNAc...) asparagine glycan. Disordered stretches follow at residues 180–247 and 284–352; these read KRNE…QVQN and HTQL…LAGN. Ser-187 carries the phosphoserine modification. Polar residues-rich tracts occupy residues 192–201 and 227–247; these read ETNNQHQQAL and NKSQ…QVQN. Asn-227 carries N-linked (GlcNAc...) asparagine glycosylation. The span at 294–320 shows a compositional bias: basic and acidic residues; it reads RPEEDSQYPEREQLVIRDRQEQQRASE. Positions 330-339 are enriched in acidic residues; it reads DEYDMDENEA.

The protein belongs to the GOLM family. In terms of assembly, interacts with DYM. Post-translationally, glycosylated. Phosphorylation sites are present in the extracellular medium.

Its subcellular location is the golgi apparatus. The protein resides in the cis-Golgi network membrane. Unknown. Cellular response protein to viral infection. This Mus musculus (Mouse) protein is Golgi membrane protein 1 (Golm1).